The chain runs to 172 residues: RNA pyrophosphohydrolase (172 aa).

Residues 6-149 (GYRPNVGIIL…KRDVYRMALK (144 aa)) form the Nudix hydrolase domain. Residues 38–59 (GGIKYGESPEQAMYRELMEEVG) carry the Nudix box motif.

Belongs to the Nudix hydrolase family. RppH subfamily. The cofactor is a divalent metal cation.

Accelerates the degradation of transcripts by removing pyrophosphate from the 5'-end of triphosphorylated RNA, leading to a more labile monophosphorylated state that can stimulate subsequent ribonuclease cleavage. In Methylobacillus flagellatus (strain ATCC 51484 / DSM 6875 / VKM B-1610 / KT), this protein is RNA pyrophosphohydrolase.